The following is a 1259-amino-acid chain: MSLWKKISLGVVIVILLLLGSVAFLVGTTSGLHLVFKAADRWVPGLDIGKVTGGWRDLTLSDVRYEQPGVAVKAGNLHLAVGLECLWNSSVCINDLALKDIQVNIDSKKMPPSEQVEEEEDSGPLDLSTPYPITLTRVALDNVNIKIDDTTVSVMDFTSGLNWQEKTLTLKPTSLKGLLIALPKVAEVAQEEVVEPKIENPQPDEKPLGETLKDLFSRPVLPEMTDVHLPLNLNIEEFKGEQLRVTGDTDITVSTMLLKVSSIDGNTKLDALDIDSSQGIVNASGTAQLSDNWPVDITLNSTLNVEPLKGEKVKLKMGGALREQLEIGVNLSGPVDMDLRAQTRLAEAGLPLNVEVNSKQLYWPFTGEKQYQADDLKLKLTGKMTDYTLSMRTAVKGQEIPPATITLDAKGNEQQVNLDKLTVAALEGKTELKALLDWQQAISWRGELTLNGINTAKEFPDWPSKLNGLIKTRGSLYGGTWQMDVPELKLTGNVKQNKVNVDGTLKGNSYMQWMIPGLHLELGPNSAEVKGELGVKDLNLDATINAPGLDNALPGLGGTAKGLVKVRGTVEAPQLLADITARGLRWQELSVAQVRVEGDIKSTDQIAGKLDVRVEQISQPDVNINLVTLNAKGSEKQHELQLRIQGEPVSGQLNLAGSFDRKEERWKGTLSNTRFQTPVGPWSLTRDIALDYRNKEQKISIGPHCWLNPNAELCVPQTIDAGAEGRAVVNLNRFDLAMLKPFMPETTQASGIFTGKADVAWDTTKEGLPQGSITLSGRNVQVTQTVNDAALPVAFQTLNLTAELRNNRAELGWTIRLTNNGQFDGQVQVTDPQGRRNLGGNVNIRNFNLAMINPIFTRGEKAAGMVSANLRLGGDVQSPQLFGQLQVTGVDIDGNFMPFDMQPSQLAVNFNGMRSTLAGTVRTQQGEIYLNGDADWSQIENWRARVTAKGSKVRITVPPMVRMDVSPDVVFEATPNLFTLDGRVDVPWARIVVHDLPESAVGVSSDVVMLNDNLQPEEPKTASIPINSNLIVHVGNNVRIDAFGLKARLTGDLNVVQDKQGLGLNGQINIPEGRFHAYGQDLIVRKGELLFSGPPDQPYLNIEAIRNPDATEDDVIAGVRVTGLADEPKAEIFSDPAMSQQAALSYLLRGQGLESDQSDSAAMTSMLIGLGVAQSGQIVGKIGETFGVSNLALDTQGVGDSSQVVVSGYVLPGLQVKYGVGIFDSIATLTLRYRLMPKLYLEAVSGVDQALDLLYQFEF.

At M1 the chain carries N-formylmethionine. The Cytoplasmic portion of the chain corresponds to 1–6 (MSLWKK). The helical; Signal-anchor for type II membrane protein transmembrane segment at 7 to 27 (ISLGVVIVILLLLGSVAFLVG) threads the bilayer. Topologically, residues 28-1259 (TTSGLHLVFK…ALDLLYQFEF (1232 aa)) are periplasmic.

Belongs to the TamB family. As to quaternary structure, interacts with TamA to form the translocation and assembly module (TAM).

It localises to the cell inner membrane. Functionally, component of the translocation and assembly module (TAM), which facilitates the insertion and assembly of specific beta-barrel proteins into the outer membrane. Promotes the assembly and secretion across the outer membrane of a subset of autotransporters, such as Ag43. Involved in the assembly of the outer membrane usher protein FimD. In vitro, when TAM is reconstituted into preformed liposomes, it can promote the assembly of several outer membrane proteins, including OmpA, EspP, Ag43 and FadL. TamA is sufficient to catalyze a low level of outer membrane protein (OMP) assembly, but both TamA and TamB are required for efficient OMP assembly. TamB may regulate TamA activity. It could regulate conformational changes in TamA to drive its function in OMP assembly. It could also act as a chaperone that facilitate the transport of nascent membrane proteins across the periplasm to TamA in the outer membrane. In terms of biological role, in addition, is involved in outer membrane lipid homeostasis. Likely transports phospholipids between the inner membrane and the outer membrane. It would provide a bridge-like structure that protects phospholipids as they travel across the periplasm. One possible explanation for the apparent dual function of TAM is that TamB is a somewhat generic transporter of hydrophobic molecules. TamB, YdbH and YhdP are redundant, but not equivalent, in performing an essential function for growth and maintaining lipid homeostasis in the outer membrane. The transport functions of TamB and YhdP could be differentiated according to the fatty acid saturation state of the phospholipids, with TamB transporting more unsaturated phospholipids and YhdP more saturated phospholipids. Any of these three proteins is sufficient for growth. In Escherichia coli (strain K12), this protein is Translocation and assembly module subunit TamB.